Consider the following 89-residue polypeptide: Cell division topological specificity factor (89 aa).

It belongs to the MinE family.

Functionally, prevents the cell division inhibition by proteins MinC and MinD at internal division sites while permitting inhibition at polar sites. This ensures cell division at the proper site by restricting the formation of a division septum at the midpoint of the long axis of the cell. The sequence is that of Cell division topological specificity factor from Proteus mirabilis (strain HI4320).